The sequence spans 304 residues: tRNA dimethylallyltransferase (304 aa).

Residue 10-17 (GPTASGKT) participates in ATP binding. 12–17 (TASGKT) lines the substrate pocket. Interaction with substrate tRNA regions lie at residues 35–38 (DSAL), 159–163 (QRLSR), and 240–245 (RCVGYR).

It belongs to the IPP transferase family. In terms of assembly, monomer. Requires Mg(2+) as cofactor.

The catalysed reaction is adenosine(37) in tRNA + dimethylallyl diphosphate = N(6)-dimethylallyladenosine(37) in tRNA + diphosphate. In terms of biological role, catalyzes the transfer of a dimethylallyl group onto the adenine at position 37 in tRNAs that read codons beginning with uridine, leading to the formation of N6-(dimethylallyl)adenosine (i(6)A). The protein is tRNA dimethylallyltransferase of Shewanella sp. (strain W3-18-1).